Here is a 116-residue protein sequence, read N- to C-terminus: M-zodatoxin-Lt6a/b (116 aa).

The N-terminal stretch at Met1–Thr22 is a signal peptide. Propeptides lie at residues Val23–Arg44 and Glu80–Arg83. Short sequence motifs (processing quadruplet motif) lie at residues Glu41–Arg44 and Glu80–Arg83. Gln84 bears the Pyrrolidone carboxylic acid mark.

It belongs to the cationic peptide 03 (latarcin) family. 06 subfamily. In terms of processing, cleavage of the propeptide depends on the processing quadruplet motif (XXXR, with at least one of X being E). Expressed by the venom gland.

It localises to the secreted. Functionally, does not have antimicrobial activity against neither Gram-positive bacteria (A.globiformis VKM Ac-1112 (MIC&gt;70 uM), and B.subtilis VKM B-501 (MIC&gt;70 uM)), nor Gram-negative bacteria (E.coli DH5-alpha (MIC&gt;70 uM), E.coli MH1 (MIC&gt;70 uM), and P.aeruginosa PAO1 (MIC&gt;70 uM)), nor yeasts (P.pastoris GS115 (MIC&gt;70 uM), and S.cerevisiae Y190 (MIC&gt;70 uM)). Does not have hemolytic activity against rabbit erythrocytes. However, it causes some conductance changes in planar bilayer membranes, without membrane rupture, suggesting a cytolytic function on other biological targets. It causes paralysis, but is not lethal when injected into insect (M.domestica) larvae. In Lachesana tarabaevi (Spider), this protein is M-zodatoxin-Lt6a/b.